Reading from the N-terminus, the 542-residue chain is CTP synthase (542 aa).

Positions 1-265 (MTRYIFITGG…DDEVLSVFGI (265 aa)) are amidoligase domain. Residue serine 13 coordinates CTP. Residue serine 13 coordinates UTP. ATP contacts are provided by residues 14–19 (SLGKGL) and aspartate 71. Mg(2+) is bound by residues aspartate 71 and glutamate 139. Residues 146 to 148 (DIE), 186 to 191 (KTKPTQ), and lysine 222 each bind CTP. UTP-binding positions include 186 to 191 (KTKPTQ) and lysine 222. The Glutamine amidotransferase type-1 domain occupies 291-541 (TIAIVGKYTG…VEAAVEQSRL (251 aa)). Glycine 353 is a binding site for L-glutamine. The active-site Nucleophile; for glutamine hydrolysis is the cysteine 380. Residues 381–384 (FGMQ), glutamate 404, and arginine 469 each bind L-glutamine. Residues histidine 514 and glutamate 516 contribute to the active site.

Belongs to the CTP synthase family. In terms of assembly, homotetramer.

The enzyme catalyses UTP + L-glutamine + ATP + H2O = CTP + L-glutamate + ADP + phosphate + 2 H(+). It catalyses the reaction L-glutamine + H2O = L-glutamate + NH4(+). It carries out the reaction UTP + NH4(+) + ATP = CTP + ADP + phosphate + 2 H(+). The protein operates within pyrimidine metabolism; CTP biosynthesis via de novo pathway; CTP from UDP: step 2/2. Its activity is regulated as follows. Allosterically activated by GTP, when glutamine is the substrate; GTP has no effect on the reaction when ammonia is the substrate. The allosteric effector GTP functions by stabilizing the protein conformation that binds the tetrahedral intermediate(s) formed during glutamine hydrolysis. Inhibited by the product CTP, via allosteric rather than competitive inhibition. Its function is as follows. Catalyzes the ATP-dependent amination of UTP to CTP with either L-glutamine or ammonia as the source of nitrogen. Regulates intracellular CTP levels through interactions with the four ribonucleotide triphosphates. The protein is CTP synthase of Parvibaculum lavamentivorans (strain DS-1 / DSM 13023 / NCIMB 13966).